The primary structure comprises 835 residues: Toll-like receptor 4 (835 aa).

The signal sequence occupies residues 1 to 25; it reads MMPLLHLAGTLIMALFLSCLRPGSL. Topologically, residues 26–638 are extracellular; it reads NPCIEVLPNI…KTIISVSVVS (613 aa). Residues cysteine 28 and cysteine 39 are joined by a disulfide bond. N-linked (GlcNAc...) asparagine glycosylation is found at asparagine 34, asparagine 43, and asparagine 75. 5 LRR repeats span residues 54–75, 78–99, 102–123, 126–147, and 150–171; these read STKN…SFTN, QLQW…AWHG, QLST…SFSG, NLEN…HIGQ, and SLKK…EYFS. A glycan (N-linked (GlcNAc...) asparagine) is linked at asparagine 172. LRR repeat units follow at residues 175–198, 204–224, and 226–247; these read NLEH…QFLR, NLSL…AFQG, and RLHE…MCLQ. 5 N-linked (GlcNAc...) asparagine glycosylation sites follow: asparagine 204, asparagine 237, asparagine 248, asparagine 281, and asparagine 307. Cysteine 280 and cysteine 304 are joined by a disulfide. An LRR 9 repeat occupies 372-381; the sequence is SLRYLDLSRN. Cysteine 388 and cysteine 389 form a disulfide bridge. LRR repeat units follow at residues 398–420, 421–442, 446–467, and 470–491; these read NLKY…MGLE, ELEY…SVFL, KLLY…IFLG, and SLNT…NVFT. 3 N-linked (GlcNAc...) asparagine glycosylation sites follow: asparagine 492, asparagine 495, and asparagine 524. LRR repeat units follow at residues 495–516, 519–540, and 543–564; these read NLTF…VFDT, RLQL…HYKQ, and SLRT…LQHF. N-linked (GlcNAc...) asparagine glycosylation is found at asparagine 572 and asparagine 575. Positions 576–627 constitute an LRRCT domain; the sequence is NSVACICEYQNFLQWVKDQKMFLVNVEQMKCASPIDMKASLVLDFTNSTCYI. 2 disulfides stabilise this stretch: cysteine 580/cysteine 606 and cysteine 582/cysteine 625. Asparagine 622 carries an N-linked (GlcNAc...) asparagine glycan. The helical transmembrane segment at 639 to 659 threads the bilayer; it reads VLVVATVAFLIYHFYFHLILI. Residues 660–835 are Cytoplasmic-facing; that stretch reads AGCKKYSRGE…EEEQEATTLT (176 aa). The region spanning 670 to 813 is the TIR domain; it reads SIYDAFVIYS…IFWRRLKKAL (144 aa).

It belongs to the Toll-like receptor family. Belongs to the lipopolysaccharide (LPS) receptor, a multi-protein complex containing at least CD14, LY96 and TLR4. Binding to bacterial LPS leads to homodimerization. Interacts with LY96 via the extracellular domain. Interacts with MYD88 and TIRAP via their respective TIR domains. Interacts with TICAM2. Interacts with NOX4. Interacts with CNPY3 and HSP90B1; this interaction is required for proper folding in the endoplasmic reticulum. Interacts with MAP3K21; this interaction leads to negative regulation of TLR4 signaling. Interacts with CD36, following CD36 stimulation by oxLDL or amyloid-beta 42, and forms a heterodimer with TLR6. The trimeric complex is internalized and triggers inflammatory response. LYN kinase activity facilitates TLR4-TLR6 heterodimerization and signal initiation. Interacts with TICAM1 in response to LPS in a WDFY1-dependent manner. Interacts with WDFY1 in response to LPS. Interacts with SMPDL3B. Interacts with CEACAM1; upon lipopolysaccharide stimulation, forms a complex including TLR4 and the phosphorylated form of SYK and CEACAM1, which in turn, recruits PTPN6 that dephosphorylates SYK, reducing the production of reactive oxygen species (ROS) and lysosome disruption, which in turn, reduces the activity of the inflammasome. Interacts with RFTN1; the interaction occurs in response to lipopolysaccharide stimulation. Interacts with SCIMP; the interaction occurs in response to lipopolysaccharide stimulation and is enhanced by phosphorylation of SCIMP by LYN. This interaction facilitates the phosphorylation of TLR4 by LYN which elicits a selective cytokine response in macrophages. Interacts with TRAF3IP3. Interacts with TREM1; this interaction enhances TLR4-mediated inflammatory response. Interacts with ZG16B/PAUF. Interacts with CD82; this interaction inhibits TLR4-mediated signaling pathway. Post-translationally, phosphorylated on tyrosine residues by LYN after binding lipopolysaccharide. In terms of processing, ubiquitinated by RNF128 via 'Lys-28'-linked polyubiquitin chains, leading to proteasomal degradation.

It is found in the cell membrane. It localises to the early endosome. Its subcellular location is the cell projection. The protein resides in the ruffle. Transmembrane receptor that functions as a pattern recognition receptor recognizing pathogen- and damage-associated molecular patterns (PAMPs and DAMPs) to induce innate immune responses via downstream signaling pathways. At the plasma membrane, cooperates with LY96 to mediate the innate immune response to bacterial lipopolysaccharide (LPS). Also involved in LPS-independent inflammatory responses triggered by free fatty acids, such as palmitate, and Ni(2+). Mechanistically, acts via MYD88, TIRAP and TRAF6, leading to NF-kappa-B activation, cytokine secretion and the inflammatory response. Alternatively, CD14-mediated TLR4 internalization via endocytosis is associated with the initiation of a MYD88-independent signaling via the TICAM1-TBK1-IRF3 axis leading to type I interferon production. In addition to the secretion of proinflammatory cytokines, initiates the activation of NLRP3 inflammasome and formation of a positive feedback loop between autophagy and NF-kappa-B signaling cascade. In complex with TLR6, promotes inflammation in monocytes/macrophages by associating with TLR6 and the receptor CD86. Upon ligand binding, such as oxLDL or amyloid-beta 42, the TLR4:TLR6 complex is internalized and triggers inflammatory response, leading to NF-kappa-B-dependent production of CXCL1, CXCL2 and CCL9 cytokines, via MYD88 signaling pathway, and CCL5 cytokine, via TICAM1 signaling pathway. In myeloid dendritic cells, vesicular stomatitis virus glycoprotein G but not LPS promotes the activation of IRF7, leading to type I IFN production in a CD14-dependent manner. The chain is Toll-like receptor 4 (Tlr4) from Rattus norvegicus (Rat).